Consider the following 351-residue polypeptide: Uroporphyrinogen decarboxylase (351 aa).

Residues 26-30 (RQAGR), phenylalanine 45, aspartate 76, tyrosine 153, serine 208, and histidine 323 each bind substrate.

Belongs to the uroporphyrinogen decarboxylase family. As to quaternary structure, homodimer.

It localises to the cytoplasm. The catalysed reaction is uroporphyrinogen III + 4 H(+) = coproporphyrinogen III + 4 CO2. It functions in the pathway porphyrin-containing compound metabolism; protoporphyrin-IX biosynthesis; coproporphyrinogen-III from 5-aminolevulinate: step 4/4. In terms of biological role, catalyzes the decarboxylation of four acetate groups of uroporphyrinogen-III to yield coproporphyrinogen-III. The polypeptide is Uroporphyrinogen decarboxylase (Prochlorococcus marinus (strain SARG / CCMP1375 / SS120)).